A 442-amino-acid chain; its full sequence is Putative mannan endo-1,6-alpha-mannosidase C970.02 (442 aa).

The first 19 residues, 1 to 19 (MSLTIFISLATILFSFAEA), serve as a signal peptide directing secretion. 10 N-linked (GlcNAc...) asparagine glycosylation sites follow: Asn25, Asn82, Asn107, Asn131, Asn201, Asn236, Asn261, Asn264, Asn277, and Asn361.

Belongs to the glycosyl hydrolase 76 family.

It carries out the reaction Random hydrolysis of (1-&gt;6)-alpha-D-mannosidic linkages in unbranched (1-&gt;6)-mannans.. In Schizosaccharomyces pombe (strain 972 / ATCC 24843) (Fission yeast), this protein is Putative mannan endo-1,6-alpha-mannosidase C970.02.